The sequence spans 666 residues: L-aspartate N-monooxygenase (nitrosuccinate-forming) (666 aa).

Residues 645-666 form a disordered region; that stretch reads LPAYEDPGVRCPSDDRLTEVTA. Basic and acidic residues predominate over residues 656–666; the sequence is PSDDRLTEVTA.

This sequence belongs to the nitrosuccinic acid synthase family. It depends on FAD as a cofactor.

The catalysed reaction is L-aspartate + 3 NADPH + 3 O2 + 2 H(+) = 2-nitrobutanedioate + 3 NADP(+) + 4 H2O. Its pathway is antibiotic biosynthesis. In terms of biological role, part of a gene cluster involved in the biosynthesis of cremeomycin, a light-sensitive o-diazoquinone with antibacterial and antiproliferative effects. Catalyzes the iterative oxidation of L-aspartic acid to nitrosuccinic acid (2-nitrobutanedioate) via N-hydroxyaspartic acid and nitrososuccinic acid. The polypeptide is L-aspartate N-monooxygenase (nitrosuccinate-forming) (Streptomyces cremeus).